We begin with the raw amino-acid sequence, 719 residues long: Cyclin-dependent kinase 11.1 (719 aa).

Basic and acidic residues-rich tracts occupy residues 1 to 20, 38 to 48, and 78 to 129; these read MSDH…ESHK, KGLESKMRESI, and KAKE…DQKV. Disordered regions lie at residues 1 to 215 and 231 to 315; these read MSDH…KDDD and EEKE…EMTE. Positions 130–140 are enriched in basic residues; sequence HEHRHHHHHRK. A compositionally biased stretch (basic and acidic residues) spans 141-163; sequence HETDGHRTNRSNRDRSSERDSEK. The segment covering 164 to 174 has biased composition (basic residues); that stretch reads HKRHIDRHKKS. 2 stretches are compositionally biased toward basic and acidic residues: residues 191–215 and 264–274; these read HTDV…KDDD and DDTKPKSPGKA. Positions 275 to 285 are enriched in acidic residues; that stretch reads EDDDDVIEVLD. A Protein kinase domain is found at 356–647; the sequence is YECVNRVDEG…ATQALDHEWF (292 aa). ATP contacts are provided by residues 362–370 and Lys-385; that span reads VDEGTFGVV. Asp-484 acts as the Proton acceptor in catalysis. The disordered stretch occupies residues 657 to 689; that stretch reads EEFPTFPAKSEQNKAPPPAKQKQQENRISHVDP. Residues 678-689 are compositionally biased toward basic and acidic residues; the sequence is KQQENRISHVDP.

Belongs to the protein kinase superfamily. CMGC Ser/Thr protein kinase family. CDC2/CDKX subfamily. Broadly expressed in somatic and germ line cells (at protein level). Not expressed in sperm (at protein level).

The protein localises to the nucleus. The enzyme catalyses L-seryl-[protein] + ATP = O-phospho-L-seryl-[protein] + ADP + H(+). It carries out the reaction L-threonyl-[protein] + ATP = O-phospho-L-threonyl-[protein] + ADP + H(+). In terms of biological role, probable cyclin-dependent kinase whose activity is most likely regulated by the cyclin cyl-1/Cylin-L. Important for normal oocyte and sperm development; probably required during multiple stages of gametogenesis. Plays a role in the activation of RAS-ERK signaling in the germ line. Also acts partially redundantly with cdk-11.2 to ensure embryonic viability. In Caenorhabditis elegans, this protein is Cyclin-dependent kinase 11.1.